Reading from the N-terminus, the 297-residue chain is 4-hydroxy-tetrahydrodipicolinate synthase (297 aa).

Thr-50 lines the pyruvate pocket. Tyr-138 serves as the catalytic Proton donor/acceptor. Lys-166 serves as the catalytic Schiff-base intermediate with substrate. Ile-208 serves as a coordination point for pyruvate.

This sequence belongs to the DapA family. In terms of assembly, homotetramer; dimer of dimers.

Its subcellular location is the cytoplasm. The enzyme catalyses L-aspartate 4-semialdehyde + pyruvate = (2S,4S)-4-hydroxy-2,3,4,5-tetrahydrodipicolinate + H2O + H(+). It functions in the pathway amino-acid biosynthesis; L-lysine biosynthesis via DAP pathway; (S)-tetrahydrodipicolinate from L-aspartate: step 3/4. Its function is as follows. Catalyzes the condensation of (S)-aspartate-beta-semialdehyde [(S)-ASA] and pyruvate to 4-hydroxy-tetrahydrodipicolinate (HTPA). The protein is 4-hydroxy-tetrahydrodipicolinate synthase of Haemophilus ducreyi (strain 35000HP / ATCC 700724).